A 212-amino-acid polypeptide reads, in one-letter code: Pyridoxine/pyridoxamine 5'-phosphate oxidase (212 aa).

Residues 61-66 (RSVLLK), 76-77 (YT), lysine 83, and glutamine 105 contribute to the FMN site. Lysine 66 is a binding site for substrate. Substrate contacts are provided by tyrosine 123, arginine 127, and serine 131. FMN contacts are provided by residues 140–141 (QS) and tryptophan 185. 191–193 (RLH) serves as a coordination point for substrate. Arginine 195 contacts FMN.

The protein belongs to the pyridoxamine 5'-phosphate oxidase family. Homodimer. Requires FMN as cofactor.

It carries out the reaction pyridoxamine 5'-phosphate + O2 + H2O = pyridoxal 5'-phosphate + H2O2 + NH4(+). The catalysed reaction is pyridoxine 5'-phosphate + O2 = pyridoxal 5'-phosphate + H2O2. It participates in cofactor metabolism; pyridoxal 5'-phosphate salvage; pyridoxal 5'-phosphate from pyridoxamine 5'-phosphate: step 1/1. The protein operates within cofactor metabolism; pyridoxal 5'-phosphate salvage; pyridoxal 5'-phosphate from pyridoxine 5'-phosphate: step 1/1. Catalyzes the oxidation of either pyridoxine 5'-phosphate (PNP) or pyridoxamine 5'-phosphate (PMP) into pyridoxal 5'-phosphate (PLP). In Dichelobacter nodosus (strain VCS1703A), this protein is Pyridoxine/pyridoxamine 5'-phosphate oxidase.